A 515-amino-acid polypeptide reads, in one-letter code: Cytidine and dCMP deaminase domain-containing protein 1 (515 aa).

Composition is skewed to polar residues over residues 1 to 11 and 18 to 27; these read MKEAGQMQNLE and SVSTQTGSMT. Disordered stretches follow at residues 1–27 and 56–83; these read MKEA…GSMT and RQKS…STDK. Residues 60-83 show a composition bias toward basic and acidic residues; it reads QKNEEGKHGPLGDNEEMTRVSTDK. The CMP/dCMP-type deaminase 1 domain occupies 71 to 169; the sequence is GDNEEMTRVS…SLLTEASSSE (99 aa). Zn(2+) is bound by residues histidine 110, cysteine 135, and cysteine 138. A Nuclear export signal motif is present at residues 272-284; the sequence is NLRQNMKDLILLL. Residues 318–483 form the CMP/dCMP-type deaminase 2 domain; that stretch reads EIARHCMVQA…LNPSEAYGLE (166 aa). Residue histidine 399 participates in Zn(2+) binding. Catalysis depends on glutamate 401, which acts as the Proton donor. Zn(2+) is bound by residues cysteine 427 and cysteine 430. A disordered region spans residues 481–515; it reads GLEQNEPERRENGVLRPVPQKEEQHQDKKLRLGIH. Positions 486–515 are enriched in basic and acidic residues; it reads EPERRENGVLRPVPQKEEQHQDKKLRLGIH. The Bipartite nuclear localization signal signature appears at 489-511; the sequence is RRENGVLRPVPQKEEQHQDKKLR.

This sequence belongs to the cytidine and deoxycytidylate deaminase family. It depends on Zn(2+) as a cofactor.

The protein localises to the cytoplasm. Its subcellular location is the nucleus. It catalyses the reaction 2'-deoxycytidine + H2O + H(+) = 2'-deoxyuridine + NH4(+). The enzyme catalyses cytidine + H2O + H(+) = uridine + NH4(+). Functionally, catalyzes the deamination of cytidine and deoxycytidine into uridine and deoxyuridine, respectively. May play an important role in testicular development and spermatogenesis. In Macaca fascicularis (Crab-eating macaque), this protein is Cytidine and dCMP deaminase domain-containing protein 1 (CDADC1).